Reading from the N-terminus, the 257-residue chain is Thiazole synthase (257 aa).

Lys96 serves as the catalytic Schiff-base intermediate with DXP. 1-deoxy-D-xylulose 5-phosphate contacts are provided by residues Gly157, 184-185 (AG), and 206-207 (NT).

The protein belongs to the ThiG family. Homotetramer. Forms heterodimers with either ThiH or ThiS.

The protein resides in the cytoplasm. It carries out the reaction [ThiS sulfur-carrier protein]-C-terminal-Gly-aminoethanethioate + 2-iminoacetate + 1-deoxy-D-xylulose 5-phosphate = [ThiS sulfur-carrier protein]-C-terminal Gly-Gly + 2-[(2R,5Z)-2-carboxy-4-methylthiazol-5(2H)-ylidene]ethyl phosphate + 2 H2O + H(+). It functions in the pathway cofactor biosynthesis; thiamine diphosphate biosynthesis. Catalyzes the rearrangement of 1-deoxy-D-xylulose 5-phosphate (DXP) to produce the thiazole phosphate moiety of thiamine. Sulfur is provided by the thiocarboxylate moiety of the carrier protein ThiS. In vitro, sulfur can be provided by H(2)S. This chain is Thiazole synthase, found in Agrobacterium fabrum (strain C58 / ATCC 33970) (Agrobacterium tumefaciens (strain C58)).